We begin with the raw amino-acid sequence, 165 residues long: Cell division protein SepF (165 aa).

The disordered stretch occupies residues 23–75; the sequence is DEYGDYAGDYETQETAPVATRSSKRESRPAPVSDLSERRRPASGPTGVVAELS.

It belongs to the SepF family. In terms of assembly, homodimer. Interacts with FtsZ.

Its subcellular location is the cytoplasm. Its function is as follows. Cell division protein that is part of the divisome complex and is recruited early to the Z-ring. Probably stimulates Z-ring formation, perhaps through the cross-linking of FtsZ protofilaments. Its function overlaps with FtsA. The chain is Cell division protein SepF from Nocardioides sp. (strain ATCC BAA-499 / JS614).